The sequence spans 195 residues: UPF0314 protein RL4541 (195 aa).

The next 4 membrane-spanning stretches (helical) occupy residues 15–35, 64–84, 127–147, and 150–170; these read FWFVACFAVLVIQIAVEYMMG, WYTPSHIIHGFLFYGLAHLIL, GDSILNSAMDTVFMCVGFFFA, and APVALTVAIATFFEIFTGYII.

It belongs to the UPF0314 family.

The protein localises to the cell membrane. This is UPF0314 protein RL4541 from Rhizobium johnstonii (strain DSM 114642 / LMG 32736 / 3841) (Rhizobium leguminosarum bv. viciae).